Consider the following 542-residue polypeptide: Chaperonin GroEL 2 (542 aa).

ATP-binding positions include 30–33 (TLGP), Lys-51, 87–91 (DGTTT), Gly-415, and Asp-496.

The protein belongs to the chaperonin (HSP60) family. In terms of assembly, forms a cylinder of 14 subunits composed of two heptameric rings stacked back-to-back. Interacts with the co-chaperonin GroES.

The protein localises to the cytoplasm. It carries out the reaction ATP + H2O + a folded polypeptide = ADP + phosphate + an unfolded polypeptide.. Together with its co-chaperonin GroES, plays an essential role in assisting protein folding. The GroEL-GroES system forms a nano-cage that allows encapsulation of the non-native substrate proteins and provides a physical environment optimized to promote and accelerate protein folding. This chain is Chaperonin GroEL 2, found in Mesorhizobium japonicum (strain LMG 29417 / CECT 9101 / MAFF 303099) (Mesorhizobium loti (strain MAFF 303099)).